Here is a 457-residue protein sequence, read N- to C-terminus: Pancreatic triacylglycerol lipase (457 aa).

The N-terminal stretch at 1-7 (LLLGAVA) is a signal peptide. Cystine bridges form between Cys-12/Cys-18 and Cys-99/Cys-110. Residue Ser-161 is the Nucleophile of the active site. Asp-185 (charge relay system) is an active-site residue. 4 residues coordinate Ca(2+): Glu-196, Arg-199, Asp-201, and Asp-204. Residues Cys-246 and Cys-270 are joined by a disulfide bond. Catalysis depends on His-272, which acts as the Charge relay system. Intrachain disulfides connect Cys-294-Cys-305 and Cys-308-Cys-313. An N-linked (GlcNAc...) asparagine glycan is attached at Asn-343. The region spanning 347 to 457 (WRYQIAVTLS…EDILLTLTPC (111 aa)) is the PLAT domain. Cys-441 and Cys-457 form a disulfide bridge.

Belongs to the AB hydrolase superfamily. Lipase family. In terms of assembly, forms a 1:1 stoichiometric complex with (pro)colipase/CLPS.

It localises to the secreted. The catalysed reaction is a triacylglycerol + H2O = a diacylglycerol + a fatty acid + H(+). It catalyses the reaction 1,2,3-tributanoylglycerol + H2O = dibutanoylglycerol + butanoate + H(+). The enzyme catalyses 1,2,3-tri-(9Z-octadecenoyl)-glycerol + H2O = di-(9Z)-octadecenoylglycerol + (9Z)-octadecenoate + H(+). It carries out the reaction all-trans-retinyl hexadecanoate + H2O = all-trans-retinol + hexadecanoate + H(+). The catalysed reaction is 1,2-di-(9Z-octadecenoyl)-glycerol + H2O = (9Z-octadecenoyl)-glycerol + (9Z)-octadecenoate + H(+). Inhibited by bile salts, is reactivated by (pro)colipase/CLPS. Functionally, plays an important role in fat metabolism. It preferentially splits the esters of long-chain fatty acids at positions 1 and 3, producing mainly 2-monoacylglycerol and free fatty acids, and shows considerably higher activity against insoluble emulsified substrates than against soluble ones. This chain is Pancreatic triacylglycerol lipase (PNLIP), found in Myocastor coypus (Coypu).